Consider the following 209-residue polypeptide: Large ribosomal subunit protein bL21m (209 aa).

The transit peptide at 1–43 (MAAAIAASALPGAFGRLVSVCSRSILASQGSGSASLWSASRRF) directs the protein to the mitochondrion.

The protein belongs to the bacterial ribosomal protein bL21 family. Component of the mitochondrial ribosome large subunit (39S) which comprises a 16S rRNA and about 50 distinct proteins.

Its subcellular location is the mitochondrion. This is Large ribosomal subunit protein bL21m (Mrpl21) from Mus musculus (Mouse).